The following is a 417-amino-acid chain: Queuine tRNA-ribosyltransferase accessory subunit 2 (417 aa).

Residues C324, C326, C329, and H355 each contribute to the Zn(2+) site.

It belongs to the queuine tRNA-ribosyltransferase family. QTRT2 subfamily. Heterodimer of a catalytic subunit and an accessory subunit. Requires Zn(2+) as cofactor.

The protein localises to the cytoplasm. In terms of biological role, non-catalytic subunit of the queuine tRNA-ribosyltransferase (TGT) that catalyzes the base-exchange of a guanine (G) residue with queuine (Q) at position 34 (anticodon wobble position) in tRNAs with GU(N) anticodons (tRNA-Asp, -Asn, -His and -Tyr), resulting in the hypermodified nucleoside queuosine (7-(((4,5-cis-dihydroxy-2-cyclopenten-1-yl)amino)methyl)-7-deazaguanosine). The protein is Queuine tRNA-ribosyltransferase accessory subunit 2 of Drosophila virilis (Fruit fly).